Consider the following 224-residue polypeptide: N-terminal Xaa-Pro-Lys N-methyltransferase 1-A (224 aa).

Residues glycine 70, arginine 75, 92–94, 120–121, and glutamine 136 each bind S-adenosyl-L-methionine; these read DVT and LQ.

The protein belongs to the methyltransferase superfamily. NTM1 family.

The protein resides in the nucleus. The catalysed reaction is N-terminal L-alanyl-L-prolyl-L-lysyl-[protein] + 3 S-adenosyl-L-methionine = N-terminal N,N,N-trimethyl-L-alanyl-L-prolyl-L-lysyl-[protein] + 3 S-adenosyl-L-homocysteine + 3 H(+). It catalyses the reaction N-terminal L-seryl-L-prolyl-L-lysyl-[protein] + 3 S-adenosyl-L-methionine = N-terminal N,N,N-trimethyl-L-seryl-L-prolyl-L-lysyl-[protein] + 3 S-adenosyl-L-homocysteine + 3 H(+). It carries out the reaction N-terminal L-prolyl-L-prolyl-L-lysyl-[protein] + 2 S-adenosyl-L-methionine = N-terminal N,N-dimethyl-L-prolyl-L-prolyl-L-lysyl-[protein] + 2 S-adenosyl-L-homocysteine + 2 H(+). Distributive alpha-N-methyltransferase that methylates the N-terminus of target proteins containing the N-terminal motif [Ala/Gly/Pro/Ser]-Pro-Lys when the initiator Met is cleaved. Specifically catalyzes mono-, di- or tri-methylation of the exposed alpha-amino group of the Ala, Gly or Ser residue in the [Ala/Gly/Ser]-Pro-Lys motif and mono- or di-methylation of Pro in the Pro-Pro-Lys motif. Required during mitosis for normal bipolar spindle formation and chromosome segregation via its action on target proteins. The chain is N-terminal Xaa-Pro-Lys N-methyltransferase 1-A (ntmt1-a) from Xenopus laevis (African clawed frog).